The following is a 51-amino-acid chain: MRDKIRLNSSAGTGHFYTTDKNKKTMPEKFEIKKFDPVVRKHVMYKEGKIK.

The segment at 1–20 is disordered; that stretch reads MRDKIRLNSSAGTGHFYTTD.

It belongs to the bacterial ribosomal protein bL33 family.

The sequence is that of Large ribosomal subunit protein bL33 from Psychromonas ingrahamii (strain DSM 17664 / CCUG 51855 / 37).